The primary structure comprises 684 residues: Threonine--tRNA ligase (684 aa).

A TGS domain is found at 1–66 (MTAVASSAPA…DTDVEVTPVA (66 aa)). The catalytic stretch occupies residues 261 to 567 (DHRKLGVELD…LTEHYAGAFP (307 aa)). Zn(2+)-binding residues include Cys-366, His-417, and His-544.

The protein belongs to the class-II aminoacyl-tRNA synthetase family. As to quaternary structure, homodimer. Requires Zn(2+) as cofactor.

It is found in the cytoplasm. It carries out the reaction tRNA(Thr) + L-threonine + ATP = L-threonyl-tRNA(Thr) + AMP + diphosphate + H(+). In terms of biological role, catalyzes the attachment of threonine to tRNA(Thr) in a two-step reaction: L-threonine is first activated by ATP to form Thr-AMP and then transferred to the acceptor end of tRNA(Thr). Also edits incorrectly charged L-seryl-tRNA(Thr). This Mycolicibacterium smegmatis (strain ATCC 700084 / mc(2)155) (Mycobacterium smegmatis) protein is Threonine--tRNA ligase.